We begin with the raw amino-acid sequence, 41 residues long: Photosystem II reaction center protein L (41 aa).

Residues 20 to 40 (SLYWGLLLIFVLAVPFSNYFF) traverse the membrane as a helical segment.

Belongs to the PsbL family. In terms of assembly, PSII is composed of 1 copy each of membrane proteins PsbA, PsbB, PsbC, PsbD, PsbE, PsbF, PsbH, PsbI, PsbJ, PsbK, PsbL, PsbM, PsbT, PsbX, PsbY, PsbZ, Psb30/Ycf12, at least 3 peripheral proteins of the oxygen-evolving complex and a large number of cofactors. It forms dimeric complexes.

Its subcellular location is the plastid. The protein resides in the chloroplast thylakoid membrane. Functionally, one of the components of the core complex of photosystem II (PSII). PSII is a light-driven water:plastoquinone oxidoreductase that uses light energy to abstract electrons from H(2)O, generating O(2) and a proton gradient subsequently used for ATP formation. It consists of a core antenna complex that captures photons, and an electron transfer chain that converts photonic excitation into a charge separation. This subunit is found at the monomer-monomer interface and is required for correct PSII assembly and/or dimerization. The protein is Photosystem II reaction center protein L of Pinus koraiensis (Korean pine).